Reading from the N-terminus, the 614-residue chain is UvrABC system protein C (614 aa).

A GIY-YIG domain is found at 26–104; the sequence is NLPGVYKMLG…IKEHRPPYNV (79 aa). The 36-residue stretch at 215-250 folds into the UVR domain; that stretch reads SDIHTTLIEKMEHSAEALDFEKAAFYRDQLSMLREV.

This sequence belongs to the UvrC family. As to quaternary structure, interacts with UvrB in an incision complex.

The protein localises to the cytoplasm. Its function is as follows. The UvrABC repair system catalyzes the recognition and processing of DNA lesions. UvrC both incises the 5' and 3' sides of the lesion. The N-terminal half is responsible for the 3' incision and the C-terminal half is responsible for the 5' incision. The chain is UvrABC system protein C from Psychrobacter sp. (strain PRwf-1).